A 294-amino-acid chain; its full sequence is Picrinine-N-methytransferase TMT2 (294 aa).

Positions Leu75–Gly84 are SAM motif I. A Vacuolar targeting signal motif is present at residues Asp137–Val143. The tract at residues Gly138–Leu146 is SAM motif II. The tract at residues Val165 to Val174 is SAM motif III.

This sequence belongs to the class I-like SAM-binding methyltransferase superfamily. gTMT family. In terms of assembly, homodimer.

The protein localises to the vacuole membrane. It catalyses the reaction picrinine + S-adenosyl-L-methionine = ervincine + S-adenosyl-L-homocysteine + H(+). It participates in alkaloid biosynthesis; vindoline biosynthesis. Its function is as follows. S-adenosyl-L-methionine-dependent N-methyltransferase involved in the biosynthesis of biologically active monoterpenoid indole alkaloids (MIAs) natural products including vindoline. Catalyzes the conversion of picrinine to N-methylpicrinine (ervincine). The sequence is that of Picrinine-N-methytransferase TMT2 from Catharanthus roseus (Madagascar periwinkle).